Consider the following 242-residue polypeptide: Glutamine transport ATP-binding protein GlnQ (242 aa).

The ABC transporter domain occupies 2–236 (IYFHQVNKYY…PKEERAKVFL (235 aa)). Residue 34–41 (GPSGSGKS) participates in ATP binding.

Belongs to the ABC transporter superfamily.

The protein localises to the cell membrane. In terms of biological role, part of the binding-protein-dependent transport system for glutamine. Probably responsible for energy coupling to the transport system. This Geobacillus stearothermophilus (Bacillus stearothermophilus) protein is Glutamine transport ATP-binding protein GlnQ (glnQ).